The sequence spans 117 residues: Peptidyl-tRNA hydrolase (117 aa).

The protein belongs to the PTH2 family.

The protein localises to the cytoplasm. The catalysed reaction is an N-acyl-L-alpha-aminoacyl-tRNA + H2O = an N-acyl-L-amino acid + a tRNA + H(+). Its function is as follows. The natural substrate for this enzyme may be peptidyl-tRNAs which drop off the ribosome during protein synthesis. The chain is Peptidyl-tRNA hydrolase from Thermoplasma acidophilum (strain ATCC 25905 / DSM 1728 / JCM 9062 / NBRC 15155 / AMRC-C165).